The chain runs to 296 residues: Phosphoribosylaminoimidazole-succinocarboxamide synthase (296 aa).

This sequence belongs to the SAICAR synthetase family.

It catalyses the reaction 5-amino-1-(5-phospho-D-ribosyl)imidazole-4-carboxylate + L-aspartate + ATP = (2S)-2-[5-amino-1-(5-phospho-beta-D-ribosyl)imidazole-4-carboxamido]succinate + ADP + phosphate + 2 H(+). It participates in purine metabolism; IMP biosynthesis via de novo pathway; 5-amino-1-(5-phospho-D-ribosyl)imidazole-4-carboxamide from 5-amino-1-(5-phospho-D-ribosyl)imidazole-4-carboxylate: step 1/2. The protein is Phosphoribosylaminoimidazole-succinocarboxamide synthase of Pelobacter propionicus (strain DSM 2379 / NBRC 103807 / OttBd1).